The following is a 102-amino-acid chain: NADH-quinone oxidoreductase subunit K (102 aa).

Transmembrane regions (helical) follow at residues 6–26 (LIGM…GVLA), 30–50 (ILFQ…AFVA), and 63–83 (MLIL…ALLL).

It belongs to the complex I subunit 4L family. As to quaternary structure, NDH-1 is composed of 14 different subunits. Subunits NuoA, H, J, K, L, M, N constitute the membrane sector of the complex.

Its subcellular location is the cell inner membrane. It carries out the reaction a quinone + NADH + 5 H(+)(in) = a quinol + NAD(+) + 4 H(+)(out). Functionally, NDH-1 shuttles electrons from NADH, via FMN and iron-sulfur (Fe-S) centers, to quinones in the respiratory chain. The immediate electron acceptor for the enzyme in this species is believed to be ubiquinone. Couples the redox reaction to proton translocation (for every two electrons transferred, four hydrogen ions are translocated across the cytoplasmic membrane), and thus conserves the redox energy in a proton gradient. This is NADH-quinone oxidoreductase subunit K from Rhodopseudomonas palustris (strain HaA2).